Consider the following 763-residue polypeptide: Phosphoglycerol transferase I (763 aa).

The next 4 helical transmembrane spans lie at 1–21 (MSEL…AWKA), 26–46 (WWFA…ITLY), 77–97 (ILPG…LGWI), and 108–128 (FGYS…SPAF).

The protein belongs to the OpgB family.

The protein localises to the cell inner membrane. It catalyses the reaction a phosphatidylglycerol + a membrane-derived-oligosaccharide D-glucose = a 1,2-diacyl-sn-glycerol + a membrane-derived-oligosaccharide 6-(glycerophospho)-D-glucose.. It functions in the pathway glycan metabolism; osmoregulated periplasmic glucan (OPG) biosynthesis. In terms of biological role, transfers a phosphoglycerol residue from phosphatidylglycerol to the membrane-bound nascent glucan backbones. This is Phosphoglycerol transferase I from Escherichia fergusonii (strain ATCC 35469 / DSM 13698 / CCUG 18766 / IAM 14443 / JCM 21226 / LMG 7866 / NBRC 102419 / NCTC 12128 / CDC 0568-73).